We begin with the raw amino-acid sequence, 317 residues long: uncharacterized protein (317 aa).

The protein belongs to the asfivirus F317L family.

The protein localises to the virion. This is an uncharacterized protein from African swine fever virus (strain Badajoz 1971 Vero-adapted) (Ba71V).